A 166-amino-acid chain; its full sequence is NADH-quinone oxidoreductase subunit B 1 (166 aa).

4 residues coordinate [4Fe-4S] cluster: Cys39, Cys40, Cys106, and Cys135.

This sequence belongs to the complex I 20 kDa subunit family. As to quaternary structure, NDH-1 is composed of 14 different subunits. Subunits NuoB, C, D, E, F, and G constitute the peripheral sector of the complex. It depends on [4Fe-4S] cluster as a cofactor.

It localises to the cell membrane. The catalysed reaction is a quinone + NADH + 5 H(+)(in) = a quinol + NAD(+) + 4 H(+)(out). In terms of biological role, NDH-1 shuttles electrons from NADH, via FMN and iron-sulfur (Fe-S) centers, to quinones in the respiratory chain. The immediate electron acceptor for the enzyme in this species is believed to be a menaquinone. Couples the redox reaction to proton translocation (for every two electrons transferred, four hydrogen ions are translocated across the cytoplasmic membrane), and thus conserves the redox energy in a proton gradient. This is NADH-quinone oxidoreductase subunit B 1 from Symbiobacterium thermophilum (strain DSM 24528 / JCM 14929 / IAM 14863 / T).